A 612-amino-acid polypeptide reads, in one-letter code: UvrABC system protein C (612 aa).

The 79-residue stretch at 20 to 98 (THSGVYRMLD…IKQHRPKYNI (79 aa)) folds into the GIY-YIG domain. Residues 208–243 (SSVLEEISAKMYQASEDMEYEKAQVYRDQLVVLRKL) form the UVR domain.

The protein belongs to the UvrC family. Interacts with UvrB in an incision complex.

It localises to the cytoplasm. Its function is as follows. The UvrABC repair system catalyzes the recognition and processing of DNA lesions. UvrC both incises the 5' and 3' sides of the lesion. The N-terminal half is responsible for the 3' incision and the C-terminal half is responsible for the 5' incision. In Francisella tularensis subsp. tularensis (strain FSC 198), this protein is UvrABC system protein C.